Here is a 360-residue protein sequence, read N- to C-terminus: Dynein intermediate light chain dil1 (360 aa).

Belongs to the dynein light intermediate chain DYN3 family. As to quaternary structure, the dynein complex consists of at least two heavy chains and a number of intermediate and light chains. Interacts with rga3, sec10, sec16, syp1, rvb2, spbc19c7.04c, spbc2f12.05 and spac3a11.10c. The N-terminal part is acetylated.

It is found in the cytoplasm. It localises to the cytoskeleton. Functionally, component of the cytoplasmic dynein which acts as a motor for the intracellular retrograde motility of vesicles and organelles along microtubules. Promotes oscillatory nuclear movement and efficient pairing of homologous centromeres during meiotic prophase. In Schizosaccharomyces pombe (strain 972 / ATCC 24843) (Fission yeast), this protein is Dynein intermediate light chain dil1 (dil1).